The following is a 452-amino-acid chain: Phenylalanine-4-hydroxylase (452 aa).

Residue Ser16 is modified to Phosphoserine; by PKA. An ACT domain is found at 36–114 (SLIFSLKEEV…TVHELSRDKK (79 aa)). Fe cation-binding residues include His285, His290, and Glu330.

Belongs to the biopterin-dependent aromatic amino acid hydroxylase family. As to quaternary structure, homodimer and homotetramer. Fe(2+) is required as a cofactor. Post-translationally, phosphorylation at Ser-16 increases basal activity and facilitates activation by the substrate phenylalanine.

It catalyses the reaction (6R)-L-erythro-5,6,7,8-tetrahydrobiopterin + L-phenylalanine + O2 = (4aS,6R)-4a-hydroxy-L-erythro-5,6,7,8-tetrahydrobiopterin + L-tyrosine. It participates in amino-acid degradation; L-phenylalanine degradation; acetoacetate and fumarate from L-phenylalanine: step 1/6. With respect to regulation, N-terminal region of PAH is thought to contain allosteric binding sites for phenylalanine and to constitute an 'inhibitory' domain that regulates the activity of a catalytic domain in the C-terminal portion of the molecule. Its function is as follows. Catalyzes the hydroxylation of L-phenylalanine to L-tyrosine. This Homo sapiens (Human) protein is Phenylalanine-4-hydroxylase (PAH).